A 409-amino-acid polypeptide reads, in one-letter code: MAREKFERIKPHINIGTIGHVDHGKTTLTAAITMALASIGNTKGKNYADIDSAPEEKARGITINTTHVEYETAKRHYAHVDCPGHADYIKNMITGAAQMDGAILVVSGADGPMPQTREHIVLAKQVGVPSMVVFINKEDQVDDPEILELVELEVRDLLTSYKFEGEEVPVITGSALLALEAFIKNPKILKGENPWVDKIYNLMDSVDSYIPTPVREIDKPFLMAIEDVFSISGRGTVATGRIERGKIKMGDSIEIIGGSLRKTTTVTGIEMFQKTLTDGVAGDNVGILMRGIQKKEIDRGMVLTKPKSIDPLTSFEAQVYLLTKEEGGRSKGFTIGYRPQFYVRTTDVTGAILNMLSDDNTPLKIASPGDRITMSVKLIQPIALEKNMRFAIREGGKTVGAGVVSKLIN.

The tr-type G domain maps to 10–214 (KPHINIGTIG…SVDSYIPTPV (205 aa)). The interval 19 to 26 (GHVDHGKT) is G1. 19–26 (GHVDHGKT) is a binding site for GTP. T26 is a binding site for Mg(2+). Positions 60–64 (GITIN) are G2. The tract at residues 81–84 (DCPG) is G3. GTP-binding positions include 81 to 85 (DCPGH) and 136 to 139 (NKED). The segment at 136–139 (NKED) is G4. The interval 174 to 176 (SAL) is G5.

The protein belongs to the TRAFAC class translation factor GTPase superfamily. Classic translation factor GTPase family. EF-Tu/EF-1A subfamily.

The protein resides in the plastid. The catalysed reaction is GTP + H2O = GDP + phosphate + H(+). Functionally, GTP hydrolase that promotes the GTP-dependent binding of aminoacyl-tRNA to the A-site of ribosomes during protein biosynthesis. This Helicosporidium sp. subsp. Simulium jonesii (Green alga) protein is Elongation factor Tu, plastid (tufA).